A 319-amino-acid chain; its full sequence is Ribonuclease Z (319 aa).

Positions 62, 64, 66, 67, 145, 215, and 273 each coordinate Zn(2+). Residue D66 is the Proton acceptor of the active site.

It belongs to the RNase Z family. As to quaternary structure, homodimer. Requires Zn(2+) as cofactor.

The enzyme catalyses Endonucleolytic cleavage of RNA, removing extra 3' nucleotides from tRNA precursor, generating 3' termini of tRNAs. A 3'-hydroxy group is left at the tRNA terminus and a 5'-phosphoryl group is left at the trailer molecule.. Its function is as follows. Zinc phosphodiesterase, which displays some tRNA 3'-processing endonuclease activity. Probably involved in tRNA maturation, by removing a 3'-trailer from precursor tRNA. The chain is Ribonuclease Z from Borrelia duttonii (strain Ly).